The primary structure comprises 751 residues: Photosystem I P700 chlorophyll a apoprotein A1 (751 aa).

8 consecutive transmembrane segments (helical) span residues Val-71–Ala-94, Leu-157–His-180, Leu-196–Leu-220, Ile-292–Tyr-310, Trp-347–Tyr-370, Leu-386–Val-412, Ala-434–His-456, and Phe-532–Leu-550. [4Fe-4S] cluster contacts are provided by Cys-574 and Cys-583. The next 2 membrane-spanning stretches (helical) occupy residues His-590–Trp-611 and Leu-665–Phe-687. His-676 is a binding site for chlorophyll a'. The chlorophyll a site is built by Met-684 and Tyr-692. Residue Trp-693 participates in phylloquinone binding. A helical membrane pass occupies residues Ala-725–Ala-745.

It belongs to the PsaA/PsaB family. The PsaA/B heterodimer binds the P700 chlorophyll special pair and subsequent electron acceptors. PSI consists of a core antenna complex that captures photons, and an electron transfer chain that converts photonic excitation into a charge separation. The eukaryotic PSI reaction center is composed of at least 11 subunits. P700 is a chlorophyll a/chlorophyll a' dimer, A0 is one or more chlorophyll a, A1 is one or both phylloquinones and FX is a shared 4Fe-4S iron-sulfur center. serves as cofactor.

The protein resides in the plastid. It localises to the chloroplast thylakoid membrane. It catalyses the reaction reduced [plastocyanin] + hnu + oxidized [2Fe-2S]-[ferredoxin] = oxidized [plastocyanin] + reduced [2Fe-2S]-[ferredoxin]. Its function is as follows. PsaA and PsaB bind P700, the primary electron donor of photosystem I (PSI), as well as the electron acceptors A0, A1 and FX. PSI is a plastocyanin-ferredoxin oxidoreductase, converting photonic excitation into a charge separation, which transfers an electron from the donor P700 chlorophyll pair to the spectroscopically characterized acceptors A0, A1, FX, FA and FB in turn. Oxidized P700 is reduced on the lumenal side of the thylakoid membrane by plastocyanin. The protein is Photosystem I P700 chlorophyll a apoprotein A1 of Zea mays (Maize).